A 320-amino-acid polypeptide reads, in one-letter code: Olfactory receptor 2C3 (320 aa).

The Extracellular segment spans residues 1-26; that stretch reads MMEIANVSSPEVFVLLGFSTRPSLET. An N-linked (GlcNAc...) asparagine glycan is attached at Asn6. The helical transmembrane segment at 27-50 threads the bilayer; it reads VLFIVVLSFYMVSILGNGIIILVS. Over 51-58 the chain is Cytoplasmic; that stretch reads HTDVHLHT. Residues 59-80 traverse the membrane as a helical segment; sequence PMYFFLANLPFLDMSFTTSIVP. Residues 81–101 lie on the Extracellular side of the membrane; that stretch reads QLLANLWGPQKTISYGGCVVQ. Cysteines 98 and 190 form a disulfide. A helical membrane pass occupies residues 102–121; the sequence is FYISHWLGATECVLLATMSY. Over 122-140 the chain is Cytoplasmic; that stretch reads DRYAAICRPLHYTVIMHPQ. A helical transmembrane segment spans residues 141–159; it reads LCLGLALASWLGGLTTSMV. Topologically, residues 160–196 are extracellular; that stretch reads GSTLTMLLPLCGNNCIDHFFCEMPLIMQLACVDTSLN. Residues 197 to 220 form a helical membrane-spanning segment; sequence EMEMYLASFVFVVLPLGLILVSYG. Over 221–237 the chain is Cytoplasmic; the sequence is HIARAVLKIRSAEGRRK. A helical transmembrane segment spans residues 238–260; it reads AFNTCSSHVAVVSLFYGSIIFMY. Topologically, residues 261–273 are extracellular; the sequence is LQPAKSTSHEQGK. Residues 274 to 293 traverse the membrane as a helical segment; sequence FIALFYTVVTPALNPLIYTL. Residues 294–320 lie on the Cytoplasmic side of the membrane; sequence RNTEVKSALRHMVLENCCGSAGKLAQI.

Belongs to the G-protein coupled receptor 1 family.

Its subcellular location is the cell membrane. Its function is as follows. Odorant receptor. The polypeptide is Olfactory receptor 2C3 (OR2C3) (Homo sapiens (Human)).